The following is a 535-amino-acid chain: CTP synthase (535 aa).

Positions 1–266 (MKTKFIFITG…DERVVEKLNI (266 aa)) are amidoligase domain. S14 lines the CTP pocket. S14 is a binding site for UTP. ATP is bound by residues 15 to 20 (SIGKGL) and D72. Mg(2+)-binding residues include D72 and E140. Residues 147–149 (DIE), 187–192 (KTKPTQ), and K223 contribute to the CTP site. Residues 187–192 (KTKPTQ) and K223 each bind UTP. One can recognise a Glutamine amidotransferase type-1 domain in the interval 292–534 (RIAIVGKYVN…VRAALIQRDA (243 aa)). G354 serves as a coordination point for L-glutamine. The active-site Nucleophile; for glutamine hydrolysis is the C381. Residues 382-385 (LGMQ), E405, and R462 contribute to the L-glutamine site. Catalysis depends on residues H507 and E509.

This sequence belongs to the CTP synthase family. As to quaternary structure, homotetramer.

It catalyses the reaction UTP + L-glutamine + ATP + H2O = CTP + L-glutamate + ADP + phosphate + 2 H(+). It carries out the reaction L-glutamine + H2O = L-glutamate + NH4(+). The catalysed reaction is UTP + NH4(+) + ATP = CTP + ADP + phosphate + 2 H(+). It participates in pyrimidine metabolism; CTP biosynthesis via de novo pathway; CTP from UDP: step 2/2. Its activity is regulated as follows. Allosterically activated by GTP, when glutamine is the substrate; GTP has no effect on the reaction when ammonia is the substrate. The allosteric effector GTP functions by stabilizing the protein conformation that binds the tetrahedral intermediate(s) formed during glutamine hydrolysis. Inhibited by the product CTP, via allosteric rather than competitive inhibition. In terms of biological role, catalyzes the ATP-dependent amination of UTP to CTP with either L-glutamine or ammonia as the source of nitrogen. Regulates intracellular CTP levels through interactions with the four ribonucleotide triphosphates. The chain is CTP synthase from Pelobacter propionicus (strain DSM 2379 / NBRC 103807 / OttBd1).